Here is a 515-residue protein sequence, read N- to C-terminus: Mucin-like protein Glc1.8a (515 aa).

Residues 1–20 (MSQITLIILILAIGFSCTKS) form the signal peptide. Residues 21-467 (HPINSTRDGE…ANDIKKPAFP (447 aa)) lie on the Extracellular side of the membrane. 28 N-linked (GlcNAc...) asparagine; by host glycosylation sites follow: asparagine 24, asparagine 45, asparagine 51, asparagine 60, asparagine 85, asparagine 93, asparagine 102, asparagine 123, asparagine 129, asparagine 138, asparagine 180, asparagine 201, asparagine 207, asparagine 216, asparagine 258, asparagine 279, asparagine 285, asparagine 319, asparagine 327, asparagine 336, asparagine 357, asparagine 363, asparagine 372, asparagine 397, asparagine 405, asparagine 413, asparagine 434, and asparagine 441. The interval 80 to 114 (SKKDENITGQSEINTSAKSQPINSTRDGEDSGTDL) is disordered. Polar residues predominate over residues 86–104 (ITGQSEINTSAKSQPINST). The disordered stretch occupies residues 314-358 (SKKDENVTGQSEINTSAKSQPINSTRDGEDSGTDLKNLLTDPANT). Residues 320–338 (VTGQSEINTSAKSQPINST) show a composition bias toward polar residues. A disordered region spans residues 393–413 (RKDENVTGQSEFNISTNSNLN). Residues 468–488 (YCIILITFQIVTVGMIIYLVF) form a helical membrane-spanning segment. At 489-515 (RTMRKPCQSERAIPLNTFGFGNNSSHE) the chain is on the cytoplasmic side.

The protein belongs to the polydnaviridae Glc1.8 protein family.

Its subcellular location is the host membrane. Its function is as follows. Involved in suppression of the insect cellular immune response. Inhibits host hemocyte adhesion and phagocytosis. This chain is Mucin-like protein Glc1.8a (O9), found in Microplitis demolitor (Parasitoid wasp).